An 800-amino-acid polypeptide reads, in one-letter code: Phenylalanine--tRNA ligase beta subunit (800 aa).

The 116-residue stretch at 39–154 folds into the tRNA-binding domain; sequence TKDIKKLVVG…EAVKPGTDAL (116 aa). The 76-residue stretch at 408–483 folds into the B5 domain; the sequence is SFVTPIKITA…RIYGYDDIPS (76 aa). 4 residues coordinate Mg(2+): D461, D467, E470, and E471. In terms of domain architecture, FDX-ACB spans 708-800; the sequence is PRFPGVTRDI…ALKKHGAIIR (93 aa).

This sequence belongs to the phenylalanyl-tRNA synthetase beta subunit family. Type 1 subfamily. In terms of assembly, tetramer of two alpha and two beta subunits. Requires Mg(2+) as cofactor.

The protein localises to the cytoplasm. It carries out the reaction tRNA(Phe) + L-phenylalanine + ATP = L-phenylalanyl-tRNA(Phe) + AMP + diphosphate + H(+). The protein is Phenylalanine--tRNA ligase beta subunit of Staphylococcus epidermidis (strain ATCC 35984 / DSM 28319 / BCRC 17069 / CCUG 31568 / BM 3577 / RP62A).